Here is a 178-residue protein sequence, read N- to C-terminus: Large ribosomal subunit protein uL6 (178 aa).

Belongs to the universal ribosomal protein uL6 family. Part of the 50S ribosomal subunit.

Functionally, this protein binds to the 23S rRNA, and is important in its secondary structure. It is located near the subunit interface in the base of the L7/L12 stalk, and near the tRNA binding site of the peptidyltransferase center. This is Large ribosomal subunit protein uL6 from Streptococcus uberis (strain ATCC BAA-854 / 0140J).